Here is a 1104-residue protein sequence, read N- to C-terminus: Collagenase ColA (1104 aa).

The signal sequence occupies residues 1–39; it reads MKKNLKRGELTKLKLVERWSATFTLAAFILFNSSFKVLA. Residues 40–86 constitute a propeptide that is removed on maturation; sequence ADKKVENSNNGQITREINADQISKTELNNEVATDNNRPLGPSIAPSR. The segment at 87–761 is S1 metalloprotease domain; that stretch reads ARNNKIYTFD…YVYDVVFHGM (675 aa). Residues 93–367 are activator domain; that stretch reads YTFDELNRMN…AANDLDLNFG (275 aa). A catalytic subdomain region spans residues 377 to 646; it reads DFNKIKADAR…MDSLLNNIDN (270 aa). Glutamate 477 provides a ligand contact to Ca(2+). Position 502 (histidine 502) interacts with Zn(2+). Residue glutamate 503 is part of the active site. A Zn(2+)-binding site is contributed by histidine 506. Ca(2+)-binding residues include glycine 510, valine 514, and glycine 516. Position 534 (glutamate 534) interacts with Zn(2+). The helper subdomain stretch occupies residues 654-767; it reads DEYVNGHEAK…FHGMNTDTNT (114 aa). An S2 domain region spans residues 762-860; the sequence is NTDTNTDVHV…KKIKVVEDKP (99 aa). Asparagine 772, lysine 773, aspartate 800, aspartate 802, aspartate 841, glutamate 866, glutamate 868, asparagine 870, aspartate 894, aspartate 897, glutamate 993, glutamate 995, asparagine 997, leucine 1016, aspartate 1020, lysine 1022, and aspartate 1023 together coordinate Ca(2+). The PKD domain occupies 774–862; it reads EPKAVIKSDS…IKVVEDKPVE (89 aa). The interval 865–979 is S3a collagen-binding domain; that stretch reads NESEPNNDFE…TYTVNVKGNL (115 aa). The interval 992 to 1104 is S3b collagen-binding domain; it reads KEVENNNDFD…GNYIVNLQNK (113 aa).

This sequence belongs to the peptidase M9B family. Collagenase subfamily. The cofactor is Ca(2+). Zn(2+) is required as a cofactor.

The protein localises to the secreted. The catalysed reaction is Digestion of native collagen in the triple helical region at Xaa-|-Gly bonds. With synthetic peptides, a preference is shown for Gly at P3 and P1', Pro and Ala at P2 and P2', and hydroxyproline, Ala or Arg at P3'.. Functionally, clostridial collagenases are among the most efficient degraders of eukaryotic collagen known; saprophytes use collagen as a carbon source while pathogens additionally digest collagen to aid in host colonization. Has both tripeptidylcarboxypeptidase on Gly-X-Y and endopeptidase activities; the endopeptidase cuts within the triple helix region of collagen while tripeptidylcarboxypeptidase successively digests the exposed ends, thus clostridial collagenases can digest large sections of collagen. The protein is Collagenase ColA (colA) of Clostridium perfringens (strain 13 / Type A).